We begin with the raw amino-acid sequence, 202 residues long: Peptidyl-tRNA hydrolase (202 aa).

Position 14 (tyrosine 14) interacts with tRNA. Histidine 19 serves as the catalytic Proton acceptor. Tyrosine 64, asparagine 66, and asparagine 112 together coordinate tRNA.

Belongs to the PTH family. As to quaternary structure, monomer.

Its subcellular location is the cytoplasm. The enzyme catalyses an N-acyl-L-alpha-aminoacyl-tRNA + H2O = an N-acyl-L-amino acid + a tRNA + H(+). In terms of biological role, hydrolyzes ribosome-free peptidyl-tRNAs (with 1 or more amino acids incorporated), which drop off the ribosome during protein synthesis, or as a result of ribosome stalling. Its function is as follows. Catalyzes the release of premature peptidyl moieties from peptidyl-tRNA molecules trapped in stalled 50S ribosomal subunits, and thus maintains levels of free tRNAs and 50S ribosomes. This chain is Peptidyl-tRNA hydrolase, found in Xanthobacter autotrophicus (strain ATCC BAA-1158 / Py2).